The chain runs to 97 residues: Apolipoprotein C-II (97 aa).

The first 22 residues, 1–22 (MGSRFFLALFLVILMLGNEVQG), serve as a signal peptide directing secretion. Residues 63–71 (SMDEKLRDM) form a lipid binding region. The interval 75-97 (SSAAMSTYAGIFTDQLLTLLRGE) is lipoprotein lipase cofactor.

It belongs to the apolipoprotein C2 family. In terms of tissue distribution, adult and fetal liver, intestine and peritoneal macrophages.

It is found in the secreted. In terms of biological role, component of chylomicrons, very low-density lipoproteins (VLDL), low-density lipoproteins (LDL), and high-density lipoproteins (HDL) in plasma. Plays an important role in lipoprotein metabolism as an activator of lipoprotein lipase. The chain is Apolipoprotein C-II (Apoc2) from Mus musculus (Mouse).